A 327-amino-acid polypeptide reads, in one-letter code: Zinc transport protein ZntB (327 aa).

The Cytoplasmic segment spans residues methionine 1–methionine 273. A helical membrane pass occupies residues alanine 274 to isoleucine 294. Residues proline 295–arginine 300 lie on the Periplasmic side of the membrane. Residues phenylalanine 301–leucine 321 form a helical membrane-spanning segment. Residues histidine 322–leucine 327 are Cytoplasmic-facing.

Belongs to the CorA metal ion transporter (MIT) (TC 1.A.35) family.

The protein resides in the cell inner membrane. The catalysed reaction is Zn(2+)(out) + H(+)(out) = Zn(2+)(in) + H(+)(in). Its function is as follows. Zinc transporter. Acts as a Zn(2+):proton symporter, which likely mediates zinc ion uptake. In Salmonella agona (strain SL483), this protein is Zinc transport protein ZntB.